We begin with the raw amino-acid sequence, 418 residues long: Dual-specificity RNA methyltransferase RlmN (418 aa).

The interval 1–21 (MADTSLMPIPGQVDPVPAPRD) is disordered. The active-site Proton acceptor is E122. Residues 128–383 (DADRGTLCVS…APVRTPRGRD (256 aa)) enclose the Radical SAM core domain. A disulfide bond links C135 and C388. Residues C142, C146, and C149 each contribute to the [4Fe-4S] cluster site. Residues 212–213 (GE), S244, 266–268 (SLH), and N345 each bind S-adenosyl-L-methionine. The S-methylcysteine intermediate role is filled by C388. The disordered stretch occupies residues 393-418 (TAAQKKSRAERDREAAAEAEAAASQA). The segment covering 399 to 408 (SRAERDREAA) has biased composition (basic and acidic residues).

The protein belongs to the radical SAM superfamily. RlmN family. It depends on [4Fe-4S] cluster as a cofactor.

It localises to the cytoplasm. The enzyme catalyses adenosine(2503) in 23S rRNA + 2 reduced [2Fe-2S]-[ferredoxin] + 2 S-adenosyl-L-methionine = 2-methyladenosine(2503) in 23S rRNA + 5'-deoxyadenosine + L-methionine + 2 oxidized [2Fe-2S]-[ferredoxin] + S-adenosyl-L-homocysteine. The catalysed reaction is adenosine(37) in tRNA + 2 reduced [2Fe-2S]-[ferredoxin] + 2 S-adenosyl-L-methionine = 2-methyladenosine(37) in tRNA + 5'-deoxyadenosine + L-methionine + 2 oxidized [2Fe-2S]-[ferredoxin] + S-adenosyl-L-homocysteine. Specifically methylates position 2 of adenine 2503 in 23S rRNA and position 2 of adenine 37 in tRNAs. m2A2503 modification seems to play a crucial role in the proofreading step occurring at the peptidyl transferase center and thus would serve to optimize ribosomal fidelity. The chain is Dual-specificity RNA methyltransferase RlmN from Erythrobacter litoralis (strain HTCC2594).